The following is a 451-amino-acid chain: POC1 centriolar protein homolog B (451 aa).

WD repeat units lie at residues 16-55 (GHKA…RAYR), 58-99 (GHKD…SEFK), 101-139 (HTAP…FLYS), 142-181 (RHTH…CVNN), 183-223 (SDSV…LLQH), 226-265 (VHSG…LIYT), and 268-307 (GHTG…LHCK). Phosphoserine is present on S321. Residues 372–394 (PECSPTTTKKKTEDMSDLPSESQ) form a disordered region. Residues 404–443 (ALEHIMEQLNVLTQTVSILEQRLTLTEDKLKDCLENQQKL) adopt a coiled-coil conformation.

It belongs to the WD repeat POC1 family. In terms of assembly, interacts with POC1A. Interacts with FAM161A. Interacts with CEP44; the interaction is direct and recruits POC1B to centriolar microtubules. Forms a microtubule-associated complex with POC5, CETN2 and FAM161A. Interacts with CCDC15. Phosphorylated in mitotic cells that may be mediated by CDK1.

It is found in the cytoplasm. The protein resides in the cytoskeleton. The protein localises to the microtubule organizing center. Its subcellular location is the centrosome. It localises to the centriole. It is found in the cilium basal body. The protein resides in the spindle pole. Plays an important role in centriole assembly and/or stability and ciliogenesis. Involved in early steps of centriole duplication, as well as in the later steps of centriole length control. Acts in concert with POC1A to ensure centriole integrity and proper mitotic spindle formation. Required for primary cilia formation, ciliary length and also cell proliferation. Required for retinal integrity. Acts as a positive regulator of centriole elongation. The polypeptide is POC1 centriolar protein homolog B (POC1B) (Pongo abelii (Sumatran orangutan)).